An 87-amino-acid polypeptide reads, in one-letter code: MPEQDEVITLIDEDGAEHDFNVIDVIEVEGSEYAILLPVEDESDEAVILKFAKDEDDNEILVDIESDEEWEKVADAWEEMVTAEEGE.

It belongs to the UPF0473 family.

The sequence is that of UPF0473 protein Dred_0776 from Desulforamulus reducens (strain ATCC BAA-1160 / DSM 100696 / MI-1) (Desulfotomaculum reducens).